The following is a 502-amino-acid chain: Probable cytosol aminopeptidase (502 aa).

Mn(2+) is bound by residues Lys-269 and Asp-274. Lys-281 is a catalytic residue. Positions 292, 351, and 353 each coordinate Mn(2+). Residue Arg-355 is part of the active site.

The protein belongs to the peptidase M17 family. It depends on Mn(2+) as a cofactor.

It is found in the cytoplasm. It carries out the reaction Release of an N-terminal amino acid, Xaa-|-Yaa-, in which Xaa is preferably Leu, but may be other amino acids including Pro although not Arg or Lys, and Yaa may be Pro. Amino acid amides and methyl esters are also readily hydrolyzed, but rates on arylamides are exceedingly low.. The catalysed reaction is Release of an N-terminal amino acid, preferentially leucine, but not glutamic or aspartic acids.. Its function is as follows. Presumably involved in the processing and regular turnover of intracellular proteins. Catalyzes the removal of unsubstituted N-terminal amino acids from various peptides. This Shewanella sediminis (strain HAW-EB3) protein is Probable cytosol aminopeptidase.